The primary structure comprises 573 residues: Squalene monooxygenase (573 aa).

Residues 1 to 19 (MWTFLGIATFTYFYKKCGD) are Cytoplasmic-facing. An interaction with MARCHF6 region spans residues 1-99 (MWTFLGIATF…EQLESKRRRK (99 aa)). An intramembrane segment occupies 20–40 (VTLANKELLLCVLVFLSLGLV). At 41 to 573 (LSYRCRHRNG…IYSEMKYLVH (533 aa)) the chain is on the cytoplasmic side. The tract at residues 61 to 72 (QFAAFSDILSAL) is required for degradation in response to high membrane cholesterol levels. Positions 100–573 (EVNLSETTLT…IYSEMKYLVH (474 aa)) are sufficient for catalytic activity. FAD is bound by residues 132–133 (VL), 152–153 (ER), Arg-160, Arg-233, Val-249, Asp-407, and Met-420. The hydrophobic; mediates interaction with membranes stretch occupies residues 515–573 (PLLLIRHFFSVAVYATYFCFKSEPWATKPRALFSSGAILYKACSIIFPLIYSEMKYLVH).

This sequence belongs to the squalene monooxygenase family. In terms of assembly, interacts (via N-terminal domain) with MARCHF6. Interacts with SMIM22; this interaction modulates lipid droplet formation. The cofactor is FAD. In terms of processing, ubiquitinated by MARCHF6 in response to high cholesterol levels in intracellular membranes, leading to proteasomal degradation. Detected in lever (at protein level).

It is found in the microsome membrane. The protein localises to the endoplasmic reticulum membrane. The enzyme catalyses squalene + reduced [NADPH--hemoprotein reductase] + O2 = (S)-2,3-epoxysqualene + oxidized [NADPH--hemoprotein reductase] + H2O + H(+). The protein operates within terpene metabolism; lanosterol biosynthesis; lanosterol from farnesyl diphosphate: step 2/3. With respect to regulation, inhibited by NB-598 ((E)N-ethyl-N-(6,6-dimethyl-2-hepten-4-ynyl)-3-[(3,3'-bi-thiophen-5-yl)methoxy]benzene-methanamine). Contrary to fungal enzymes, the mammalian enzyme is only slightly inhibited by terbinafine. Its function is as follows. Catalyzes the stereospecific oxidation of squalene to (S)-2,3-epoxysqualene, and is considered to be a rate-limiting enzyme in steroid biosynthesis. The chain is Squalene monooxygenase (Sqle) from Rattus norvegicus (Rat).